The following is a 221-amino-acid chain: ATP phosphoribosyltransferase (221 aa).

It belongs to the ATP phosphoribosyltransferase family. Short subfamily. As to quaternary structure, heteromultimer composed of HisG and HisZ subunits.

It is found in the cytoplasm. It catalyses the reaction 1-(5-phospho-beta-D-ribosyl)-ATP + diphosphate = 5-phospho-alpha-D-ribose 1-diphosphate + ATP. It functions in the pathway amino-acid biosynthesis; L-histidine biosynthesis; L-histidine from 5-phospho-alpha-D-ribose 1-diphosphate: step 1/9. Catalyzes the condensation of ATP and 5-phosphoribose 1-diphosphate to form N'-(5'-phosphoribosyl)-ATP (PR-ATP). Has a crucial role in the pathway because the rate of histidine biosynthesis seems to be controlled primarily by regulation of HisG enzymatic activity. This is ATP phosphoribosyltransferase from Carboxydothermus hydrogenoformans (strain ATCC BAA-161 / DSM 6008 / Z-2901).